A 180-amino-acid chain; its full sequence is Small ribosomal subunit protein uS4 (180 aa).

The S4 RNA-binding domain maps to 102-174 (RRLQTMLVRK…PARKLEQKEE (73 aa)). The segment at 154-180 (VPFSPLANPEHPARKLEQKEETNEESA) is disordered. The span at 164-174 (HPARKLEQKEE) shows a compositional bias: basic and acidic residues.

Belongs to the universal ribosomal protein uS4 family. Part of the 30S ribosomal subunit. Contacts protein S5. The interaction surface between S4 and S5 is involved in control of translational fidelity.

Its function is as follows. One of the primary rRNA binding proteins, it binds directly to 16S rRNA where it nucleates assembly of the body of the 30S subunit. With S5 and S12 plays an important role in translational accuracy. The sequence is that of Small ribosomal subunit protein uS4 from Nanoarchaeum equitans (strain Kin4-M).